Here is a 366-residue protein sequence, read N- to C-terminus: ACP-SH:acetate ligase (366 aa).

Its subcellular location is the cytoplasm. It carries out the reaction holo-[ACP] + acetate + ATP = acetyl-[ACP] + AMP + diphosphate. Acyl-carrier protein (ACP) acetate ligase of the biotin-dependent malonate decarboxylase multienzyme complex (EC 7.2.4.4). Involved in the conversion of the thiol group of the ACP-bound 2'-(5-phosphoribosyl)-3'-dephospho-CoA prosthetic group into its acetyl thioester using the energy from the hydrolysis of ATP. The sequence is that of ACP-SH:acetate ligase (madH) from Malonomonas rubra.